Here is a 750-residue protein sequence, read N- to C-terminus: GTP pyrophosphokinase rsh (750 aa).

The 100-residue stretch at 45 to 144 (YFSHPLEVAA…VKLADRLHNM (100 aa)) folds into the HD domain. The region spanning 390-451 (DQVFCFTPKG…KNGDEVDIIR (62 aa)) is the TGS domain. The tract at residues 587–613 (AAKVDPAATTPKPGKRALPIRGTNPDL) is disordered. The ACT domain occupies 676–750 (RISVSAINSP…SVSSAKRVNG (75 aa)).

It belongs to the RelA/SpoT family.

The catalysed reaction is GTP + ATP = guanosine 3'-diphosphate 5'-triphosphate + AMP. Its function is as follows. Functions as a (p)ppGpp synthase. In eubacteria ppGpp (guanosine 3'-diphosphate 5'-diphosphate) is a mediator of the stringent response that coordinates a variety of cellular activities in response to changes in nutritional abundance. Plays a role in adaptation of Brucella to its intracellular host environment. The chain is GTP pyrophosphokinase rsh (rsh) from Brucella abortus (strain 2308).